The sequence spans 418 residues: Serine protease inhibitor A3K (418 aa).

An N-terminal signal peptide occupies residues methionine 1 to cysteine 21. N-linked (GlcNAc...) asparagine glycosylation is found at asparagine 39, asparagine 105, asparagine 185, and asparagine 270. The interval glycine 369–arginine 394 is RCL.

It belongs to the serpin family. Expressed in liver and secreted in plasma.

It localises to the secreted. In terms of biological role, contrapsin inhibits trypsin-like proteases. The polypeptide is Serine protease inhibitor A3K (Serpina3k) (Mus musculus (Mouse)).